Consider the following 652-residue polypeptide: Beta-mannosyltransferase 1 (652 aa).

Topologically, residues 1 to 15 (MVDLFQWLKFYSMRR) are cytoplasmic. The chain crosses the membrane as a helical span at residues 16 to 34 (LGQVAITLVLLNLFVFLGY). Residues 35–652 (KFTPSTVIGS…LYQLQEEERS (618 aa)) lie on the Extracellular side of the membrane. The N-linked (GlcNAc...) asparagine glycan is linked to Asn57. A coiled-coil region spans residues 535-652 (PARYAKQMEN…LYQLQEEERS (118 aa)). The disordered stretch occupies residues 536-621 (ARYAKQMENE…EAKENEAKKK (86 aa)).

The protein belongs to the BMT family.

It is found in the membrane. Beta-mannosyltransferase involved in cell wall biosynthesis. Involved in the beta-mannosylation of outer chains of N-glycans. The polypeptide is Beta-mannosyltransferase 1 (BMT1) (Komagataella phaffii (strain ATCC 76273 / CBS 7435 / CECT 11047 / NRRL Y-11430 / Wegner 21-1) (Yeast)).